Here is a 414-residue protein sequence, read N- to C-terminus: Esterase FrsA (414 aa).

This sequence belongs to the FrsA family.

The enzyme catalyses a carboxylic ester + H2O = an alcohol + a carboxylate + H(+). Functionally, catalyzes the hydrolysis of esters. This chain is Esterase FrsA, found in Escherichia coli O7:K1 (strain IAI39 / ExPEC).